The following is a 358-amino-acid chain: NADH-quinone oxidoreductase subunit H (358 aa).

The next 8 helical transmembrane spans lie at 30–50, 96–116, 129–149, 165–185, 201–221, 264–284, 297–317, and 336–356; these read IVIG…MIFM, FLYN…FSCL, VGIF…LLAG, GAQM…IVIL, GWFL…YLIA, LFII…PLHI, IPGF…LMWI, and YLVP…VFKL.

Belongs to the complex I subunit 1 family. In terms of assembly, NDH-1 is composed of 14 different subunits. Subunits NuoA, H, J, K, L, M, N constitute the membrane sector of the complex.

The protein resides in the cell inner membrane. It carries out the reaction a quinone + NADH + 5 H(+)(in) = a quinol + NAD(+) + 4 H(+)(out). Functionally, NDH-1 shuttles electrons from NADH, via FMN and iron-sulfur (Fe-S) centers, to quinones in the respiratory chain. The immediate electron acceptor for the enzyme in this species is believed to be ubiquinone. Couples the redox reaction to proton translocation (for every two electrons transferred, four hydrogen ions are translocated across the cytoplasmic membrane), and thus conserves the redox energy in a proton gradient. This subunit may bind ubiquinone. The polypeptide is NADH-quinone oxidoreductase subunit H (Phocaeicola vulgatus (strain ATCC 8482 / DSM 1447 / JCM 5826 / CCUG 4940 / NBRC 14291 / NCTC 11154) (Bacteroides vulgatus)).